The primary structure comprises 316 residues: D-alanine--D-alanine ligase (316 aa).

Residues 112–310 (KTALKAHGLP…FGKLCRWLVE (199 aa)) form the ATP-grasp domain. Residue 139–189 (MATPYVVKPNNEGSSVGVYLVNEAANGPPHLSDDMPDEVMVETYAPGRELT) participates in ATP binding. Residues aspartate 261, glutamate 277, and asparagine 279 each contribute to the Mg(2+) site.

It belongs to the D-alanine--D-alanine ligase family. It depends on Mg(2+) as a cofactor. Mn(2+) serves as cofactor.

It is found in the cytoplasm. It carries out the reaction 2 D-alanine + ATP = D-alanyl-D-alanine + ADP + phosphate + H(+). Its pathway is cell wall biogenesis; peptidoglycan biosynthesis. Its function is as follows. Cell wall formation. The chain is D-alanine--D-alanine ligase from Jannaschia sp. (strain CCS1).